An 878-amino-acid polypeptide reads, in one-letter code: Phosphoenolpyruvate carboxylase (878 aa).

Active-site residues include His-138 and Lys-545.

It belongs to the PEPCase type 1 family. Requires Mg(2+) as cofactor.

It carries out the reaction oxaloacetate + phosphate = phosphoenolpyruvate + hydrogencarbonate. Functionally, forms oxaloacetate, a four-carbon dicarboxylic acid source for the tricarboxylic acid cycle. The sequence is that of Phosphoenolpyruvate carboxylase from Shewanella loihica (strain ATCC BAA-1088 / PV-4).